A 267-amino-acid polypeptide reads, in one-letter code: NAD kinase (267 aa).

The active-site Proton acceptor is D45. NAD(+) contacts are provided by residues 45-46 (DG), 123-124 (NE), R149, D151, A186, and N226.

It belongs to the NAD kinase family. A divalent metal cation serves as cofactor.

The protein resides in the cytoplasm. It carries out the reaction NAD(+) + ATP = ADP + NADP(+) + H(+). Its function is as follows. Involved in the regulation of the intracellular balance of NAD and NADP, and is a key enzyme in the biosynthesis of NADP. Catalyzes specifically the phosphorylation on 2'-hydroxyl of the adenosine moiety of NAD to yield NADP. This is NAD kinase from Shouchella clausii (strain KSM-K16) (Alkalihalobacillus clausii).